Consider the following 408-residue polypeptide: Sporulation integral membrane protein YlbJ (408 aa).

8 consecutive transmembrane segments (helical) span residues 6-26 (INTL…ISHP), 43-63 (VVFP…GFGI), 81-101 (VPGV…PAGA), 131-151 (LFIF…GILL), 214-234 (VTSS…FSVF), 294-314 (IIVS…VAGI), 324-344 (PFFI…MLLW), and 377-397 (LLVQ…IIIF).

Its subcellular location is the cell membrane. Its function is as follows. Required for spore cortex formation. The polypeptide is Sporulation integral membrane protein YlbJ (ylbJ) (Bacillus subtilis (strain 168)).